Consider the following 513-residue polypeptide: GMP synthase [glutamine-hydrolyzing] (513 aa).

Residues 9 to 198 (LILVLDFGSQ…VRRVCNCTGE (190 aa)) form the Glutamine amidotransferase type-1 domain. Cys-86 (nucleophile) is an active-site residue. Active-site residues include His-172 and Glu-174. Positions 199-388 (WTMENFIEIE…LGIPEHLVWR (190 aa)) constitute a GMPS ATP-PPase domain. 226 to 232 (SGGVDSS) serves as a coordination point for ATP.

In terms of assembly, homodimer.

It carries out the reaction XMP + L-glutamine + ATP + H2O = GMP + L-glutamate + AMP + diphosphate + 2 H(+). It functions in the pathway purine metabolism; GMP biosynthesis; GMP from XMP (L-Gln route): step 1/1. Catalyzes the synthesis of GMP from XMP. This is GMP synthase [glutamine-hydrolyzing] from Staphylococcus epidermidis (strain ATCC 35984 / DSM 28319 / BCRC 17069 / CCUG 31568 / BM 3577 / RP62A).